Reading from the N-terminus, the 457-residue chain is MSKRYAVVLAAGQGTRMKSKLYKVLHPVCGKPMVEHVVDQISTLDVDKVVTIVGHGAEKVQEHLAGKSEFVKQEEQLGTAHAVLQAKPELAGKDGVTLVVCGDTPLIEASTMEALLKYHHEKRAKATILTTVIEDPTGYGRIIRDDLGIVEKIVEHKDATEKEQRISEINTGTYCFDNKALFEALENVSNDNVQGEYYLPDVIKILKDLDEVVAAYRMESFEESLGVNDRIALAEASKLMQRRINDNHMRNGVTLVNPENTYIDIDVKIGQDTVIEPGVMLRGNTVIGDDCVISSGSEIANSVIGERVHVRNSSIFESKVGDDVQIGPYAHLRPESDIHNHVKIGNYVETKKAIVGEGTKLPHFIYMGDAEIGKNVNVGCGSIAVNYDGKNKAKTIIGDDVFVGCNSNLIAPVKVGDRAFIAAGSTITKDVPEDALGIARAKQENKMDYAKRLNHGK.

Residues 1–230 (MSKRYAVVLA…FEESLGVNDR (230 aa)) form a pyrophosphorylase region. UDP-N-acetyl-alpha-D-glucosamine-binding positions include 9–12 (LAAG), Lys-23, Gln-73, and 78–79 (GT). Asp-103 is a binding site for Mg(2+). UDP-N-acetyl-alpha-D-glucosamine-binding residues include Gly-140, Glu-155, Asn-170, and Asn-228. Asn-228 contributes to the Mg(2+) binding site. The tract at residues 231-251 (IALAEASKLMQRRINDNHMRN) is linker. The segment at 252-457 (GVTLVNPENT…DYAKRLNHGK (206 aa)) is N-acetyltransferase. UDP-N-acetyl-alpha-D-glucosamine-binding residues include Arg-333 and Lys-351. Residue His-363 is the Proton acceptor of the active site. UDP-N-acetyl-alpha-D-glucosamine-binding residues include Tyr-366 and Asn-377. Acetyl-CoA is bound by residues 386-387 (NY), Ala-423, and Arg-440.

It in the N-terminal section; belongs to the N-acetylglucosamine-1-phosphate uridyltransferase family. In the C-terminal section; belongs to the transferase hexapeptide repeat family. As to quaternary structure, homotrimer. The cofactor is Mg(2+).

Its subcellular location is the cytoplasm. It carries out the reaction alpha-D-glucosamine 1-phosphate + acetyl-CoA = N-acetyl-alpha-D-glucosamine 1-phosphate + CoA + H(+). The catalysed reaction is N-acetyl-alpha-D-glucosamine 1-phosphate + UTP + H(+) = UDP-N-acetyl-alpha-D-glucosamine + diphosphate. It participates in nucleotide-sugar biosynthesis; UDP-N-acetyl-alpha-D-glucosamine biosynthesis; N-acetyl-alpha-D-glucosamine 1-phosphate from alpha-D-glucosamine 6-phosphate (route II): step 2/2. Its pathway is nucleotide-sugar biosynthesis; UDP-N-acetyl-alpha-D-glucosamine biosynthesis; UDP-N-acetyl-alpha-D-glucosamine from N-acetyl-alpha-D-glucosamine 1-phosphate: step 1/1. It functions in the pathway bacterial outer membrane biogenesis; LPS lipid A biosynthesis. Catalyzes the last two sequential reactions in the de novo biosynthetic pathway for UDP-N-acetylglucosamine (UDP-GlcNAc). The C-terminal domain catalyzes the transfer of acetyl group from acetyl coenzyme A to glucosamine-1-phosphate (GlcN-1-P) to produce N-acetylglucosamine-1-phosphate (GlcNAc-1-P), which is converted into UDP-GlcNAc by the transfer of uridine 5-monophosphate (from uridine 5-triphosphate), a reaction catalyzed by the N-terminal domain. The chain is Bifunctional protein GlmU from Listeria welshimeri serovar 6b (strain ATCC 35897 / DSM 20650 / CCUG 15529 / CIP 8149 / NCTC 11857 / SLCC 5334 / V8).